A 339-amino-acid chain; its full sequence is Intelectin-1 (339 aa).

An N-terminal signal peptide occupies residues 1–18 (MLSYSLLLLALAFPAGHA). Residues 58–108 (GDMNYGYRSCNEIKSSDSRAPDGIYTLATEDGESYQTFCDMTTNGGGWTLV) enclose the Fibrinogen C-terminal domain. C67 and C96 are disulfide-bonded. Residues H112, E113, N115, G118, G123, D124, and D159 each contribute to the Ca(2+) site. Disulfide bonds link C120/C306, C225/C285, and C277/C291. N-linked (GlcNAc...) asparagine glycosylation is present at N189. Ca(2+)-binding residues include N286, E288, E300, and D308. A carbohydrate-binding positions include 288 to 289 (EH) and E300.

In terms of assembly, homotrimer; disulfide-linked. Homohexamer; disulfide-linked. Forms primarily homotrimers in solution, but can also form homohexamers. Post-translationally, N-glycosylated.

The protein resides in the secreted. The protein localises to the cytoplasmic vesicle. Its subcellular location is the secretory vesicle. Functionally, lectin that specifically recognizes microbial carbohydrate chains in a calcium-dependent manner. Binds to microbial glycans that contain a terminal acyclic 1,2-diol moiety, including beta-linked D-galactofuranose (beta-Galf) and D-phosphoglycerol-modified glycans. Binds to S.pneumoniae serotypes with glycans that contain beta-linked D-galactofuranose (beta-Galf) and with D-phosphoglycerol-modified glycans. Can bind a variety of monosaccharides (in vitro). Probably plays a role in the defense system against microorganisms. The polypeptide is Intelectin-1 (itln1) (Xenopus laevis (African clawed frog)).